We begin with the raw amino-acid sequence, 391 residues long: Putative gustatory receptor 98a (391 aa).

At 1-31 the chain is on the cytoplasmic side; sequence MEQMSGELHAASLLYMRRLMKCLGMLPFGQN. A helical transmembrane segment spans residues 32 to 52; it reads LFSKGFCYVLLFVSLGFSSYW. At 53-74 the chain is on the extracellular side; that stretch reads RFSFDYEFDYDFLNDRFSSTID. The chain crosses the membrane as a helical span at residues 75-95; that stretch reads LSNFVALVLGHAIIVLELLWG. Residues 96 to 128 are Cytoplasmic-facing; it reads NCSKDVDRQLQAIHSQIKLQLGTSNSTDRVRRY. The helical transmembrane segment at 129 to 149 threads the bilayer; sequence CNWIYGSLIIRWLIFIVVTIY. Over 150–173 the chain is Extracellular; sequence SNRALTINATYSELVFLARFSEFT. N-linked (GlcNAc...) asparagine glycosylation occurs at Asn-157. A helical membrane pass occupies residues 174 to 194; that stretch reads LYCAVILFIYQELIVGGSNVL. The Cytoplasmic segment spans residues 195–239; that stretch reads DELYRTRYEMWSIRRLSLQKLAKLQAIHNSLWQAIRCLECYFQLS. A helical transmembrane segment spans residues 240–260; it reads LITLLMKFFIDTSALPYWLYL. Over 261–272 the chain is Extracellular; sequence SRVEHTRVAVQH. The helical transmembrane segment at 273 to 293 threads the bilayer; it reads YVATVECIKLLEIVVPCYLCT. Topologically, residues 294-347 are cytoplasmic; the sequence is RCDAMQRKFLSMFYTVTTDRRSSQLNAALRSLNLQLSQEKYKFSAGGMVDINTE. Residues 348–368 form a helical membrane-spanning segment; it reads MLGKFFFGMISYIVICIQFSI. Residues 369–391 lie on the Extracellular side of the membrane; it reads NFRAKKMSNEQMSQNITSTSAPI. Asn-383 carries an N-linked (GlcNAc...) asparagine glycan.

The protein belongs to the insect chemoreceptor superfamily. Gustatory receptor (GR) family. Gr2a subfamily.

It is found in the cell membrane. Probable gustatory receptor which mediates acceptance or avoidance behavior, depending on its substrates. This Drosophila melanogaster (Fruit fly) protein is Putative gustatory receptor 98a (Gr98a).